The following is a 99-amino-acid chain: NADH-quinone oxidoreductase subunit K (99 aa).

Transmembrane regions (helical) follow at residues 3–23 (PMYY…GVLL), 28–48 (IIVF…LVTF), and 62–82 (FFVM…IVAI).

It belongs to the complex I subunit 4L family. NDH-1 is composed of 14 different subunits. Subunits NuoA, H, J, K, L, M, N constitute the membrane sector of the complex.

The protein localises to the cell membrane. The enzyme catalyses a quinone + NADH + 5 H(+)(in) = a quinol + NAD(+) + 4 H(+)(out). In terms of biological role, NDH-1 shuttles electrons from NADH, via FMN and iron-sulfur (Fe-S) centers, to quinones in the respiratory chain. The immediate electron acceptor for the enzyme in this species is believed to be a menaquinone. Couples the redox reaction to proton translocation (for every two electrons transferred, four hydrogen ions are translocated across the cytoplasmic membrane), and thus conserves the redox energy in a proton gradient. The chain is NADH-quinone oxidoreductase subunit K from Acidothermus cellulolyticus (strain ATCC 43068 / DSM 8971 / 11B).